Reading from the N-terminus, the 105-residue chain is Heat shock protein HspQ (105 aa).

The segment at 75–105 is disordered; that stretch reads GEAQEAHPEQPSLDELAESIRHQLQAPRLRN.

This sequence belongs to the HspQ family.

It is found in the cytoplasm. Involved in the degradation of certain denaturated proteins, including DnaA, during heat shock stress. This Serratia proteamaculans (strain 568) protein is Heat shock protein HspQ.